The chain runs to 346 residues: tRNA N6-adenosine threonylcarbamoyltransferase (346 aa).

Fe cation contacts are provided by His-111 and His-115. Substrate contacts are provided by residues 134-138 (LVSGG), Asp-167, Gly-180, and Asn-279. Asp-307 contributes to the Fe cation binding site.

This sequence belongs to the KAE1 / TsaD family. It depends on Fe(2+) as a cofactor.

Its subcellular location is the cytoplasm. It catalyses the reaction L-threonylcarbamoyladenylate + adenosine(37) in tRNA = N(6)-L-threonylcarbamoyladenosine(37) in tRNA + AMP + H(+). In terms of biological role, required for the formation of a threonylcarbamoyl group on adenosine at position 37 (t(6)A37) in tRNAs that read codons beginning with adenine. Is involved in the transfer of the threonylcarbamoyl moiety of threonylcarbamoyl-AMP (TC-AMP) to the N6 group of A37, together with TsaE and TsaB. TsaD likely plays a direct catalytic role in this reaction. The chain is tRNA N6-adenosine threonylcarbamoyltransferase from Burkholderia cenocepacia (strain ATCC BAA-245 / DSM 16553 / LMG 16656 / NCTC 13227 / J2315 / CF5610) (Burkholderia cepacia (strain J2315)).